A 1523-amino-acid chain; its full sequence is Disco-interacting protein 2 homolog A (1523 aa).

Positions 9-105 constitute a DMAP1-binding domain; that stretch reads EAAPLPAEVL…TSSASEDEGS (97 aa). The disordered stretch occupies residues 72–110; the sequence is KMPMPSKRRSALVHSSVETYTPPDTSSASEDEGSLRRPG. A compositionally biased stretch (polar residues) spans 87–99; that stretch reads SVETYTPPDTSSA. Phosphothreonine is present on residues T92 and T115. The segment at 132 to 158 is disordered; sequence QGSSTSSSASSTSSHPGGRPAAAPSAS. Low complexity predominate over residues 134-158; sequence SSTSSSASSTSSHPGGRPAAAPSAS. 2 short sequence motifs (PXXP motif; required for interaction with CTTN) span residues 235 to 238 and 259 to 262; these read PKRP and PNQP.

It belongs to the DIP2 family. As to quaternary structure, interacts with FSTL1; DIP2A may act as a cell surface receptor for FSTL1. Interacts (via N-terminus) with CTTN (via SH3 domain); the interaction promotes acetylation of CTTN and is required for proper synaptic transmission. Interacts with SHANK3. As to expression, detected in heart, liver, spleen, lung, kidney and brain with highest levels in brain (at protein level). In adult cortex, preferentially expressed in excitatory neurons. Broadly expressed in neuronal, reproductive and vascular tissues as well as in heart, kidney, liver and lung with expression detected in neurons, mesenchyme, endothelium, smooth muscle cells and cardiomyocytes. Expressed in ectoderm-derived tissues in the developing embryo. Expressed in the developing nervous system.

The protein resides in the cell membrane. The protein localises to the mitochondrion. Its subcellular location is the cell projection. It localises to the dendritic spine. It catalyses the reaction acetate + ATP + CoA = acetyl-CoA + AMP + diphosphate. Catalyzes the de novo synthesis of acetyl-CoA in vitro. Promotes acetylation of CTTN, possibly by providing the acetyl donor, ensuring correct dendritic spine morphology and synaptic transmission. Binds to follistatin-related protein FSTL1 and may act as a cell surface receptor for FSTL1, contributing to AKT activation and subsequent FSTL1-induced survival and function of endothelial cells and cardiac myocytes. This Mus musculus (Mouse) protein is Disco-interacting protein 2 homolog A (Dip2a).